The primary structure comprises 380 residues: Cytochrome b (380 aa).

Helical transmembrane passes span phenylalanine 33 to methionine 53, tryptophan 77 to isoleucine 98, tryptophan 113 to leucine 133, and phenylalanine 178 to phenylalanine 198. Residues histidine 83 and histidine 97 each contribute to the heme b site. Heme b-binding residues include histidine 182 and histidine 196. Histidine 201 serves as a coordination point for a ubiquinone. Helical transmembrane passes span tyrosine 226–serine 246, leucine 288–histidine 308, leucine 320–glycine 340, and phenylalanine 347–proline 367.

It belongs to the cytochrome b family. As to quaternary structure, the cytochrome bc1 complex contains 3 respiratory subunits (MT-CYB, CYC1 and UQCRFS1), 2 core proteins (UQCRC1 and UQCRC2) and probably 6 low-molecular weight proteins. Heme b serves as cofactor.

The protein resides in the mitochondrion inner membrane. Functionally, component of the ubiquinol-cytochrome c reductase complex (complex III or cytochrome b-c1 complex) that is part of the mitochondrial respiratory chain. The b-c1 complex mediates electron transfer from ubiquinol to cytochrome c. Contributes to the generation of a proton gradient across the mitochondrial membrane that is then used for ATP synthesis. The sequence is that of Cytochrome b (mt-cyb) from Zenopsis nebulosa (Mirror dory).